The following is a 482-amino-acid chain: Adenylosuccinate lyase (482 aa).

Substrate contacts are provided by residues 14-15, 82-84, and 108-109; these read RY, RHD, and TS. The Proton donor/acceptor role is filled by H156. K196 is covalently cross-linked (Glycyl lysine isopeptide (Lys-Gly) (interchain with G-Cter in ubiquitin)). Q238 contacts substrate. Residue S286 is the Proton donor/acceptor of the active site. Positions 300, 326, 331, and 335 each coordinate substrate.

The protein belongs to the lyase 1 family. Adenylosuccinate lyase subfamily. In terms of assembly, homotetramer. Residues from neighboring subunits contribute catalytic and substrate-binding residues to each active site.

It carries out the reaction N(6)-(1,2-dicarboxyethyl)-AMP = fumarate + AMP. It catalyses the reaction (2S)-2-[5-amino-1-(5-phospho-beta-D-ribosyl)imidazole-4-carboxamido]succinate = 5-amino-1-(5-phospho-beta-D-ribosyl)imidazole-4-carboxamide + fumarate. It functions in the pathway purine metabolism; AMP biosynthesis via de novo pathway; AMP from IMP: step 2/2. Its pathway is purine metabolism; IMP biosynthesis via de novo pathway; 5-amino-1-(5-phospho-D-ribosyl)imidazole-4-carboxamide from 5-amino-1-(5-phospho-D-ribosyl)imidazole-4-carboxylate: step 2/2. This is Adenylosuccinate lyase (ADE13) from Saccharomyces cerevisiae (strain ATCC 204508 / S288c) (Baker's yeast).